The primary structure comprises 289 residues: Protease HtpX (289 aa).

2 consecutive transmembrane segments (helical) span residues 5-25 (IVLFAITNIAVLILASIVMSL) and 33-53 (MSGLLVMALILGFGGSLISLL). Position 140 (His-140) interacts with Zn(2+). Glu-141 is a catalytic residue. His-144 serves as a coordination point for Zn(2+). 2 helical membrane-spanning segments follow: residues 155 to 175 (LLQGVLNTFVIVLARVVGGFI) and 193 to 213 (GIVLVLELLFGLFATIITMWF). Glu-218 contributes to the Zn(2+) binding site.

Belongs to the peptidase M48B family. It depends on Zn(2+) as a cofactor.

The protein resides in the cell inner membrane. The protein is Protease HtpX of Xylella fastidiosa (strain M23).